The chain runs to 170 residues: STLISSFANRSLDVADLVSLSGAHTFGVAHCPAFEDRSSRVRHNPAIDGKFATALRNKCSGDNPSGTLTQKLDVRTPDVFDNKYYFDLIARQGLFKSDQGLIDHPTTKRMATRFSLNQGAFFEQFARSMTKMSNMDILTGTKGEIRNNCAVPNRRVRTSRPPSPARGDRR.

Residue Asn9 is glycosylated (N-linked (GlcNAc...) asparagine). His24 lines the heme b pocket. Thr25 is a Ca(2+) binding site. Cys31 and Cys59 are disulfide-bonded. Asp73, Thr76, and Asp81 together coordinate Ca(2+).

It belongs to the peroxidase family. Classical plant (class III) peroxidase subfamily. It depends on Ca(2+) as a cofactor. Heme b is required as a cofactor.

The catalysed reaction is 2 a phenolic donor + H2O2 = 2 a phenolic radical donor + 2 H2O. Its function is as follows. Removal of H(2)O(2), oxidation of toxic reductants, biosynthesis and degradation of lignin, suberization, auxin catabolism, response to environmental stresses such as wounding, pathogen attack and oxidative stress. These functions might be dependent on each isozyme/isoform in each plant tissue. Involved in defense response to powdery meldew fungus. The polypeptide is Peroxidase 2 (Hordeum vulgare (Barley)).